The following is a 180-amino-acid chain: 3-phenylpropionate/cinnamic acid dioxygenase subunit beta (180 aa).

It belongs to the bacterial ring-hydroxylating dioxygenase beta subunit family. In terms of assembly, this dioxygenase system consists of four proteins: the two subunits of the hydroxylase component (HcaE and HcaF), a ferredoxin (HcaC) and a ferredoxin reductase (HcaD).

It catalyses the reaction 3-phenylpropanoate + NADH + O2 + H(+) = 3-(cis-5,6-dihydroxycyclohexa-1,3-dien-1-yl)propanoate + NAD(+). It carries out the reaction (E)-cinnamate + NADH + O2 + H(+) = (2E)-3-(cis-5,6-dihydroxycyclohexa-1,3-dien-1-yl)prop-2-enoate + NAD(+). It participates in aromatic compound metabolism; 3-phenylpropanoate degradation. Its function is as follows. Part of the multicomponent 3-phenylpropionate dioxygenase. Converts 3-phenylpropionic acid (PP) and cinnamic acid (CI) into 3-phenylpropionate-dihydrodiol (PP-dihydrodiol) and cinnamic acid-dihydrodiol (CI-dihydrodiol), respectively. This Photorhabdus laumondii subsp. laumondii (strain DSM 15139 / CIP 105565 / TT01) (Photorhabdus luminescens subsp. laumondii) protein is 3-phenylpropionate/cinnamic acid dioxygenase subunit beta.